Consider the following 404-residue polypeptide: WD repeat and SOCS box-containing protein 2 (404 aa).

7 WD repeats span residues 16 to 55 (GRPHQFDWKSSCETWSVAFSPDGSWFAWSQGHCIVKLIPW), 81 to 140 (GSPK…IWEV), 144 to 183 (LLLLNLSGHQDVVRDLSFTPSGSLILVSASRDKTLRIWDL), 188 to 226 (KQIQVLSGHLQWVYCCSISPDCSMLCSAAGEKSVFLWSM), 230 to 268 (TLIRKLEGHQSSVVSCDFSPDSALLVTASYDTNVIMWDP), 283 to 322 (DPAMDDSDVHISSLRSVCFSPEGLYLATVADDRLLRIWAL), and 325 to 362 (KTPIAFAPMTNGLCCTFFPHGGVIATGTRDGHVQFWTA). Positions 68–87 (AKSRSSKNETKGRGSPKEKT) are disordered. The SOCS box domain occupies 356 to 404 (HVQFWTAPRVLSSLKHLCRKALRSFLTTYQVLALPIPKKMKEFLTYRTF).

It functions in the pathway protein modification; protein ubiquitination. Functionally, may be a substrate-recognition component of a SCF-like ECS (Elongin-Cullin-SOCS-box protein) E3 ubiquitin ligase complex which mediates the ubiquitination and subsequent proteasomal degradation of target proteins. The chain is WD repeat and SOCS box-containing protein 2 (WSB2) from Homo sapiens (Human).